A 146-amino-acid chain; its full sequence is Anti-sigma F factor (146 aa).

The protein belongs to the anti-sigma-factor family.

The enzyme catalyses L-seryl-[protein] + ATP = O-phospho-L-seryl-[protein] + ADP + H(+). It catalyses the reaction L-threonyl-[protein] + ATP = O-phospho-L-threonyl-[protein] + ADP + H(+). Its function is as follows. Binds to sigma F and blocks its ability to form an RNA polymerase holoenzyme (E-sigma F). Phosphorylates SpoIIAA on a serine residue. This phosphorylation may enable SpoIIAA to act as an anti-anti-sigma factor that counteracts SpoIIAB and thus releases sigma F from inhibition. The sequence is that of Anti-sigma F factor from Halalkalibacterium halodurans (strain ATCC BAA-125 / DSM 18197 / FERM 7344 / JCM 9153 / C-125) (Bacillus halodurans).